The primary structure comprises 1039 residues: Alpha-mannosidase 2C1 (1039 aa).

Co(2+) contacts are provided by H259, D261, D371, and H576. D371 acts as the Nucleophile in catalysis.

Belongs to the glycosyl hydrolase 38 family. The cofactor is Co(2+). In terms of tissue distribution, expressed in kidney and liver (at protein level). Widely expressed, with highest levels in lung, ovary and testis. Also detected at lower levels in heart, brain, liver, spleen, kidney and thymus.

Its subcellular location is the cytoplasm. The enzyme catalyses Hydrolysis of terminal, non-reducing alpha-D-mannose residues in alpha-D-mannosides.. Inhibited by 1,4-dideoxy-1,4-imino-d-mannitol (DIM) and EDTA. In terms of biological role, cleaves alpha 1,2-, alpha 1,3-, and alpha 1,6-linked mannose residues from glycoproteins. Involved in the degradation of free oligosaccharides in the cytoplasm. This is Alpha-mannosidase 2C1 from Mus musculus (Mouse).